A 372-amino-acid chain; its full sequence is DNA replication and repair protein RecF (372 aa).

Residue 30-37 (GENAQGKT) participates in ATP binding.

The protein belongs to the RecF family.

The protein resides in the cytoplasm. Functionally, the RecF protein is involved in DNA metabolism; it is required for DNA replication and normal SOS inducibility. RecF binds preferentially to single-stranded, linear DNA. It also seems to bind ATP. In Geobacillus thermodenitrificans (strain NG80-2), this protein is DNA replication and repair protein RecF.